The sequence spans 258 residues: Aspartate/glutamate leucyltransferase (258 aa).

The protein belongs to the R-transferase family. Bpt subfamily.

The protein resides in the cytoplasm. The enzyme catalyses N-terminal L-glutamyl-[protein] + L-leucyl-tRNA(Leu) = N-terminal L-leucyl-L-glutamyl-[protein] + tRNA(Leu) + H(+). It catalyses the reaction N-terminal L-aspartyl-[protein] + L-leucyl-tRNA(Leu) = N-terminal L-leucyl-L-aspartyl-[protein] + tRNA(Leu) + H(+). Its function is as follows. Functions in the N-end rule pathway of protein degradation where it conjugates Leu from its aminoacyl-tRNA to the N-termini of proteins containing an N-terminal aspartate or glutamate. This chain is Aspartate/glutamate leucyltransferase, found in Rhodopseudomonas palustris (strain ATCC BAA-98 / CGA009).